The chain runs to 121 residues: Small ribosomal subunit protein uS13 (121 aa).

Residues 91–121 (HRRGLPVRGQKTKNNARTRKGPVKTVANKKK) form a disordered region.

The protein belongs to the universal ribosomal protein uS13 family. In terms of assembly, part of the 30S ribosomal subunit. Forms a loose heterodimer with protein S19. Forms two bridges to the 50S subunit in the 70S ribosome.

Its function is as follows. Located at the top of the head of the 30S subunit, it contacts several helices of the 16S rRNA. In the 70S ribosome it contacts the 23S rRNA (bridge B1a) and protein L5 of the 50S subunit (bridge B1b), connecting the 2 subunits; these bridges are implicated in subunit movement. Contacts the tRNAs in the A and P-sites. This Staphylococcus haemolyticus (strain JCSC1435) protein is Small ribosomal subunit protein uS13.